Consider the following 573-residue polypeptide: MIPRNLISGLFLLPFVVAELNIYGYLDLKTLADGFHTTTACIAALNQTVDCDARTAVAAAVADTYYWTLDNVTTLCTSQCQQSLTSWTSAVDAACGNRPIVEDGIVKLASSTPLTYKEGFDLVCLKSGDSWCMIESQEWEGSDILKYPTDYCSTGDPEYDGPECFEKGFDQLAIEAGDERMTSLYEKDLLCSDCFLKVFRQRLLSPFLLKGGYTSYLVEQFQDMQSYCSTSMPYATSTSEVFMGTATRTMPTGSPPPTTTCGGPTIQPTDPPLSCEAITDKYNVTTGDSHSDLHGEFSLASKPRFLKANAIDRQHEPIEKLDHAICYAGTSEPPGGSYESQPPVHQPTGASEYYTTAIPPAPTSTGTTPSCGRYYEVVAGDQCNTIALHFGITVDAFLSLNTQIDERCSNLWIAYAYCVAPVDIVDQPMTIVDQDIATQGNVLPATELPSPRMGRVVLNIMIGSVVTQLLENAALSMDIAGVRRTSAQQGIVIRVPVIQTLAKRVLTVRADQALQETKHVPALNLAHVATWRDIVEMEPTTAHPGDAILERAKGPRIHSIALYVTVLYLDLWI.

The first 18 residues, 1 to 18, serve as a signal peptide directing secretion; the sequence is MIPRNLISGLFLLPFVVA. N-linked (GlcNAc...) asparagine glycans are attached at residues Asn46, Asn71, and Asn283. Positions 373–419 constitute a LysM domain; sequence RYYEVVAGDQCNTIALHFGITVDAFLSLNTQIDERCSNLWIAYAYCV. Residues 375 to 405 are lysM domain; it reads YEVVAGDQCNTIALHFGITVDAFLSLNTQID.

It is found in the secreted. Might have a role in sequestration of chitin oligosaccharides (breakdown products of fungal cell walls that are released during invasion and act as triggers of host immunity) to dampen host defense. The chain is LysM domain-containing protein ARB_01155/01156 from Arthroderma benhamiae (strain ATCC MYA-4681 / CBS 112371) (Trichophyton mentagrophytes).